Reading from the N-terminus, the 178-residue chain is Large ribosomal subunit protein bL25 (178 aa).

This sequence belongs to the bacterial ribosomal protein bL25 family. CTC subfamily. Part of the 50S ribosomal subunit; part of the 5S rRNA/L5/L18/L25 subcomplex. Contacts the 5S rRNA. Binds to the 5S rRNA independently of L5 and L18.

Functionally, this is one of the proteins that binds to the 5S RNA in the ribosome where it forms part of the central protuberance. The polypeptide is Large ribosomal subunit protein bL25 (Helicobacter acinonychis (strain Sheeba)).